Here is a 302-residue protein sequence, read N- to C-terminus: Syntaxin-17 (302 aa).

Ser-2 carries the post-translational modification N-acetylserine. Topologically, residues 2–228 (SEDEEKVKLR…KNLGKAAKYK (227 aa)) are cytoplasmic. Lys-41 bears the N6-acetyllysine mark. A coiled-coil region spans residues 53 to 123 (EEHINAGRTV…EELKKQFNDE (71 aa)). Tyr-157 is subject to Phosphotyrosine; by ABL1. Positions 162–224 (IPQDQNAAES…EEGTKNLGKA (63 aa)) constitute a t-SNARE coiled-coil homology domain. Residues 229-249 (LAALPVAGALIGGMVGGPIGL) traverse the membrane as a helical segment. The necessary and sufficient for localization to autophagosome stretch occupies residues 229–275 (LAALPVAGALIGGMVGGPIGLLAGFKVAGIAAALGGGVLGFTGGKLI). At 250 to 254 (LAGFK) the chain is on the lumenal side. Residues 255–275 (VAGIAAALGGGVLGFTGGKLI) form a helical membrane-spanning segment. At 276–302 (QRKKQKMMEKLTSSCPDLPSQTDKKCS) the chain is on the cytoplasmic side. A Phosphoserine modification is found at Ser-289. The short motif at 299-302 (KKCS) is the Endoplasmic reticulum retention signal element.

This sequence belongs to the syntaxin family. As to quaternary structure, forms a SNARE complex composed of VAMP8, SNAP29 and STX17 involved in fusion of autophagosome with lysosome. Interacts with VAMP7 and VTI1B. Probably interacts with BET1, SCFD1 and SEC22B. Interacts with PTPN2 and ABL1; involved in STX17 phosphorylation. Interacts with COPB1. Interacts with TMED9 and TMED10; the interaction is direct. Interacts with ATG14. Interacts with RUBCNL/PACER; promoting targeting of RUBCNL/PACER to autophagosome. Interacts with VAMP8, SNAP29, VPS39 and VPS41; these interactions are increased in the absence of TMEM39A. Interacts with IRGM; promoting STX17 recruitment to autophagosomes. Interacts with ATG8 proteins GABARAP and MAP1LC3B. Interacts with RNF115; this interaction enhances STX17 stability which in turn promotes autophagosome maturation. Interacts with RAB39A (GTP-bound); the interaction promotes autophagosome-lysosome membrane fusion driven by STX17-SNAP29-VAMP8. Interacts with RAB39B; the interaction may promote a different fonction in autophagy as compared with RAB39A. (Microbial infection) The interactions with VAMP8, SNAP29 and VPS41 are decreased in presence of SARS coronavirus-2/SARS-CoV-2 ORF3A protein. In terms of processing, phosphorylated at Tyr-157 probably by ABL1. Dephosphorylation by PTPN2; regulates exit from the endoplasmic reticulum. Post-translationally, (Microbial infection) Cleaved by the L.pneumophila serine protease Lpg1137, impairing endoplasmic reticulum-mitochondria communication, leading to inhibit autophagy.

The protein localises to the endoplasmic reticulum membrane. Its subcellular location is the smooth endoplasmic reticulum membrane. The protein resides in the endoplasmic reticulum-Golgi intermediate compartment membrane. It is found in the cytoplasmic vesicle. It localises to the autophagosome membrane. The protein localises to the COPII-coated vesicle membrane. Its subcellular location is the cytoplasm. The protein resides in the cytosol. It is found in the mitochondrion membrane. It localises to the autolysosome membrane. In terms of biological role, SNAREs, soluble N-ethylmaleimide-sensitive factor-attachment protein receptors, are essential proteins for fusion of cellular membranes. SNAREs localized on opposing membranes assemble to form a trans-SNARE complex, an extended, parallel four alpha-helical bundle that drives membrane fusion. STX17 is a SNARE of the autophagosome involved in autophagy through the direct control of autophagosome membrane fusion with the lysosome membrane. May also play a role in the early secretory pathway where it may maintain the architecture of the endoplasmic reticulum-Golgi intermediate compartment/ERGIC and Golgi and/or regulate transport between the endoplasmic reticulum, the ERGIC and the Golgi. This Homo sapiens (Human) protein is Syntaxin-17.